The sequence spans 523 residues: 2-isopropylmalate synthase (523 aa).

Residues 5-267 (VIIFDTTLRD…ETGINAKEIH (263 aa)) form the Pyruvate carboxyltransferase domain. The Mn(2+) site is built by aspartate 14, histidine 202, histidine 204, and asparagine 238. Residues 392-523 (ELQQLVVHSD…QQNKQEFGSV (132 aa)) are regulatory domain.

This sequence belongs to the alpha-IPM synthase/homocitrate synthase family. LeuA type 1 subfamily. As to quaternary structure, homodimer. Mn(2+) is required as a cofactor.

The protein localises to the cytoplasm. The catalysed reaction is 3-methyl-2-oxobutanoate + acetyl-CoA + H2O = (2S)-2-isopropylmalate + CoA + H(+). The protein operates within amino-acid biosynthesis; L-leucine biosynthesis; L-leucine from 3-methyl-2-oxobutanoate: step 1/4. Catalyzes the condensation of the acetyl group of acetyl-CoA with 3-methyl-2-oxobutanoate (2-ketoisovalerate) to form 3-carboxy-3-hydroxy-4-methylpentanoate (2-isopropylmalate). In Shewanella halifaxensis (strain HAW-EB4), this protein is 2-isopropylmalate synthase.